Reading from the N-terminus, the 606-residue chain is MNMFSSLSLVTLLLLTMPIMMMSFNTYKPSNYPLYVKTAISYAFITSMIPTMMFIHSGQELIISNWHWLTIQTLKLSLSFKMDYFSMMFIPVALFVTWSIMEFSMWYMYSDPNINKFFKYLLLFLITMLILVTANNLFQLFIGWEGVGIMSFLLIGWWYGRADANTAALQAILYNRIGDIGFILAMAWFLTNLNTWDLQQIFMLNPSDSNMPLIGLALAATGKSAQFGLHPWLPSAMEGPTPVSALLHSSTMVVAGIFLLIRFYPLTENNKYIQSITLCLGAITTLFTAMCALTQNDIKKIIAFSTSSQLGLMMVTIGINQPYLAFLHICTHAFFKAMLFMCSGSIIHSLNDEQDIRKMGGLFKAMPFTTTALIVGSLALTGMPFLTGFYSKDLIIEAANTSYTNAWALLMTLIATSFTAIYSTRIIFFALLGQPRFPTLVNINENNPLLINSIKRLLIGSLFAGYIISNNIPPTTIPQMTMPYYLKTTALIVTILGFILALEISNMTKNLKYHYPSNAFKFSTLLGYFPTIMHRLAPYMNLSMSQKSASSLLDLIWLEAILPKTISLAQMKASTLVTNQKGLIKLYFLSFLITILISMILFNFHE.

M1 is subject to N-formylmethionine. The next 15 helical transmembrane spans lie at 4–24 (FSSL…MMSF), 43–63 (AFIT…ELII), 87–107 (MMFI…SMWY), 117–137 (FFKY…ANNL), 140–160 (LFIG…WWYG), 171–191 (AILY…WFLT), 213–233 (LIGL…HPWL), 241–261 (TPVS…FLLI), 273–293 (IQSI…MCAL), 310–330 (LGLM…LHIC), 366–386 (MPFT…MPFL), 413–433 (LIAT…ALLG), 457–477 (LLIG…PTTI), 482–502 (MPYY…ILAL), and 582–602 (GLIK…MILF).

In terms of assembly, core subunit of respiratory chain NADH dehydrogenase (Complex I) which is composed of 45 different subunits.

It localises to the mitochondrion inner membrane. The catalysed reaction is a ubiquinone + NADH + 5 H(+)(in) = a ubiquinol + NAD(+) + 4 H(+)(out). Functionally, core subunit of the mitochondrial membrane respiratory chain NADH dehydrogenase (Complex I) which catalyzes electron transfer from NADH through the respiratory chain, using ubiquinone as an electron acceptor. Essential for the catalytic activity and assembly of complex I. The chain is NADH-ubiquinone oxidoreductase chain 5 (MT-ND5) from Bos taurus (Bovine).